The primary structure comprises 239 residues: Lactate utilization protein A 1 (239 aa).

This sequence belongs to the LutA/YkgE family.

Is involved in L-lactate degradation and allows cells to grow with lactate as the sole carbon source. This Bacillus anthracis (strain A0248) protein is Lactate utilization protein A 1.